A 584-amino-acid chain; its full sequence is Mitochondrial sodium/calcium exchanger protein (584 aa).

Positions 1–26 (MAGRRLNLRWALSVLCVLLMAETVSG) are cleaved as a signal peptide. The Extracellular portion of the chain corresponds to 27–95 (TRGSSTGAHI…GIFCHFPPSL (69 aa)). Residue N60 is glycosylated (N-linked (GlcNAc...) asparagine). Residues 96–116 (LPLAVTLYVSWLLYLFLILGV) traverse the membrane as a helical segment. At 117–140 (TAAKFFCPNLSAISTTLKLSHNVA) the chain is on the cytoplasmic side. A helical transmembrane segment spans residues 141-161 (GVTFLAFGNGAPDIFSALVAF). Residues 162–168 (SDPHTAG) lie on the Extracellular side of the membrane. The helical transmembrane segment at 169-189 (LALGALFGAGVLVTTVVAGGI) threads the bilayer. Residues 190 to 200 (TILHPFMAASR) lie on the Cytoplasmic side of the membrane. Residues 201 to 221 (PFFRDIVFYMVAVFLTFLMLF) form a helical membrane-spanning segment. Residues 222 to 226 (RGRVT) lie on the Extracellular side of the membrane. A helical transmembrane segment spans residues 227–247 (LAWALGYLGLYVFYVVTVILC). The Cytoplasmic portion of the chain corresponds to 248–325 (TWIYQRQRRG…KWRRKSAYWK (78 aa)). At S258 the chain carries Phosphoserine; by PKA. Residues 326–346 (ALKVFKLPVEFLLLLTVPVVD) traverse the membrane as a helical segment. Residues 347-360 (PDKDDQNWKRPLNC) lie on the Extracellular side of the membrane. A helical transmembrane segment spans residues 361–381 (LHLVISPLVVVLTLQSGTYGV). Over 382-383 (YE) the chain is Cytoplasmic. A helical transmembrane segment spans residues 384 to 404 (IGGLVPVWVVVVIAGTALASV). At 405–416 (TFFATSDSQPPR) the chain is on the extracellular side. A helical transmembrane segment spans residues 417–437 (LHWLFAFLGFLTSALWINAAA). At 438–445 (TEVVNILR) the chain is on the cytoplasmic side. A helical membrane pass occupies residues 446–466 (SLGVVFRLSNTVLGLTLLAWG). The Extracellular portion of the chain corresponds to 467 to 487 (NSIGDAFSDFTLARQGYPRMA). A helical transmembrane segment spans residues 488-508 (FSACFGGIIFNILVGVGLGCL). Residues 509–524 (LQISRSHTEVKLEPDG) are Cytoplasmic-facing. Residues 525–545 (LLVWVLAGALGLSLVFSLVSV) form a helical membrane-spanning segment. Residues 546–558 (PLQCFQLSRVYGF) lie on the Extracellular side of the membrane. Residues 559–579 (CLLLFYLNFLVVALLTEFGVI) form a helical membrane-spanning segment. At 580–584 (HLKSM) the chain is on the cytoplasmic side.

The protein belongs to the Ca(2+):cation antiporter (CaCA) (TC 2.A.19) family. SLC24A subfamily. Post-translationally, phosphorylation at Ser-258 by PKA prevents calcium overload. As to expression, present in pancreatic beta-cells (at protein level).

Its subcellular location is the mitochondrion inner membrane. It catalyses the reaction Ca(2+)(in) + 3 Na(+)(out) = Ca(2+)(out) + 3 Na(+)(in). It carries out the reaction 3 Li(+)(out) + Ca(2+)(in) = 3 Li(+)(in) + Ca(2+)(out). Inhibited by the sodium/calcium exchanger inhibitor CGP-37157. Strongly inhibited by zinc. Its function is as follows. Mitochondrial sodium/calcium antiporter that mediates sodium-dependent calcium efflux from mitochondrion, by mediating the exchange of 3 sodium ions per 1 calcium ion. Plays a central role in mitochondrial calcium homeostasis by mediating mitochondrial calcium extrusion: calcium efflux is essential for mitochondrial function and cell survival, notably in cardiomyocytes. Regulates rates of glucose-dependent insulin secretion in pancreatic beta-cells during the first phase of insulin secretion: acts by mediating efflux of calcium from mitochondrion, thereby affecting cytoplasmic calcium responses. Required for store-operated Ca(2+) entry (SOCE) and Ca(2+) release-activated Ca(2+) (CRAC) channel regulation: sodium transport by SLC8B1 leads to promote calcium-shuttling that modulates mitochondrial redox status, thereby regulating SOCE activity. Involved in B-lymphocyte chemotaxis. Able to transport Ca(2+) in exchange of either Li(+) or Na(+), explaining how Li(+) catalyzes Ca(2+) exchange. In contrast to other members of the family its function is independent of K(+). The chain is Mitochondrial sodium/calcium exchanger protein from Homo sapiens (Human).